Here is a 213-residue protein sequence, read N- to C-terminus: Orotate phosphoribosyltransferase (213 aa).

K26 is a binding site for 5-phospho-alpha-D-ribose 1-diphosphate. Orotate is bound at residue 34–35 (FF). 5-phospho-alpha-D-ribose 1-diphosphate contacts are provided by residues 72–73 (YK), R99, K100, K103, H105, and 124–132 (DDVITAGTA). T128 and R156 together coordinate orotate.

The protein belongs to the purine/pyrimidine phosphoribosyltransferase family. PyrE subfamily. In terms of assembly, homodimer. Mg(2+) serves as cofactor.

The catalysed reaction is orotidine 5'-phosphate + diphosphate = orotate + 5-phospho-alpha-D-ribose 1-diphosphate. The protein operates within pyrimidine metabolism; UMP biosynthesis via de novo pathway; UMP from orotate: step 1/2. In terms of biological role, catalyzes the transfer of a ribosyl phosphate group from 5-phosphoribose 1-diphosphate to orotate, leading to the formation of orotidine monophosphate (OMP). The sequence is that of Orotate phosphoribosyltransferase from Pseudomonas paraeruginosa (strain DSM 24068 / PA7) (Pseudomonas aeruginosa (strain PA7)).